Here is a 1067-residue protein sequence, read N- to C-terminus: Probable isoleucine--tRNA ligase, cytoplasmic (1067 aa).

A 'HIGH' region motif is present at residues 47-57 (PFATGLPHYGH). A 'KMSKS' region motif is present at residues 604 to 608 (KMSKR). Lysine 607 lines the ATP pocket.

This sequence belongs to the class-I aminoacyl-tRNA synthetase family.

It localises to the cytoplasm. It carries out the reaction tRNA(Ile) + L-isoleucine + ATP = L-isoleucyl-tRNA(Ile) + AMP + diphosphate. The polypeptide is Probable isoleucine--tRNA ligase, cytoplasmic (ileS) (Dictyostelium discoideum (Social amoeba)).